A 175-amino-acid chain; its full sequence is Putative FAS1 domain-containing protein 081L (175 aa).

The FAS1 domain occupies 28-172 (GPIVPSVWTI…GLVHIVDQFP (145 aa)).

The protein is Putative FAS1 domain-containing protein 081L of Invertebrate iridescent virus 3 (IIV-3).